The following is a 274-amino-acid chain: Outer surface protein A (274 aa).

The signal sequence occupies residues 1–16 (MKKYLLGIGLILALIA). Cysteine 17 is lipidated: N-palmitoyl cysteine. The S-diacylglycerol cysteine moiety is linked to residue cysteine 17.

The protein belongs to the OspA lipoprotein family.

The protein resides in the cell outer membrane. The protein localises to the cell surface. The polypeptide is Outer surface protein A (Borreliella burgdorferi (Lyme disease spirochete)).